We begin with the raw amino-acid sequence, 115 residues long: Promotilin (115 aa).

The first 25 residues, Met1–Ala25, serve as a signal peptide directing secretion. The disordered stretch occupies residues Gln39–Glu72.

Belongs to the motilin family.

It localises to the secreted. Plays an important role in the regulation of interdigestive gastrointestinal motility and indirectly causes rhythmic contraction of duodenal and colonic smooth muscle. In Homo sapiens (Human), this protein is Promotilin (MLN).